We begin with the raw amino-acid sequence, 848 residues long: Coiled-coil domain-containing protein 110 (848 aa).

Residues 41-62 (SEGVKESGGNEPEYGCASEPEN) are disordered. Positions 442–794 (LQNYLKESLQ…LSDKVSSQNN (353 aa)) form a coiled coil. Ser-620 carries the phosphoserine modification.

It is found in the nucleus. The polypeptide is Coiled-coil domain-containing protein 110 (Ccdc110) (Mus musculus (Mouse)).